We begin with the raw amino-acid sequence, 135 residues long: UPF0102 protein Mkms_2031 (135 aa).

Belongs to the UPF0102 family.

This Mycobacterium sp. (strain KMS) protein is UPF0102 protein Mkms_2031.